Reading from the N-terminus, the 163-residue chain is MEMHWITLVAFIATFFNLAATSINNSSLPDVDLTNPLRFFTNIPAGLNFNEVIFLERNGFYLGGIDSPSIYHLINGTAVYFGDVRDNIMPGTVGTTRNVTDVDYGSLLTEYGYEANTDYVSRWIATHVVISPLNATEFFQTPVPVPVPVPITILHQQVNSKLH.

The helical transmembrane segment at 7 to 23 threads the bilayer; sequence TLVAFIATFFNLAATSI.

It is found in the membrane. This is an uncharacterized protein from Saccharomyces cerevisiae (strain ATCC 204508 / S288c) (Baker's yeast).